Consider the following 239-residue polypeptide: Prolyl hydroxylase EGLN3 (239 aa).

Positions 62–73 (AGPRAGVSKRHL) are beta(2)beta(3) 'finger-like' loop. The interval 88-104 (CEAISFLLSLIDRLVLY) is required for interaction with ADRB2. The region spanning 116–214 (ERSKAMVACY…RYAMTVWYFD (99 aa)) is the Fe2OG dioxygenase domain. Fe cation-binding residues include His135, Asp137, and His196. Position 205 (Arg205) interacts with 2-oxoglutarate.

In terms of assembly, interacts with BCL2 (via its BH4 domain); the interaction disrupts the BAX-BCL4 complex inhibiting the anti-apoptotic activity of BCL2. Interacts with WDR83; the interaction leads to almost complete elimination of HIF-mediated reporter activity. Interacts with ADRB2; the interaction hydroxylates ADRB2 facilitating its ubiquitination by the VHL-E3 ligase complex. Interacts with PAX2; the interaction targets PAX2 for destruction. Interacts with PKM; the interaction hydroxylates PKM in hypoxia. Interacts with LIMD1, WTIP and AJUBA. It depends on Fe(2+) as a cofactor. The cofactor is L-ascorbate. Ubiquitinated by SIAH1 and/or SIAH2 in response to the unfolded protein response (UPR), leading to its degradation. In terms of tissue distribution, widely expressed at low levels. Expressed at higher levels in adult heart (cardiac myocytes, aortic endothelial cells and coronary artery smooth muscle), lung and placenta, and in fetal spleen, heart and skeletal muscle. Also expressed in pancreas. Localized to pancreatic acini and islet cells.

It is found in the nucleus. The protein localises to the cytoplasm. The catalysed reaction is L-prolyl-[protein] + 2-oxoglutarate + O2 = trans-4-hydroxy-L-prolyl-[protein] + succinate + CO2. The enzyme catalyses L-prolyl-[hypoxia-inducible factor alpha subunit] + 2-oxoglutarate + O2 = trans-4-hydroxy-L-prolyl-[hypoxia-inducible factor alpha subunit] + succinate + CO2. Activated in cardiovascular cells and Hela cells following exposure to hypoxia. Inhibited by polynitrogen compounds probably by chelation to Fe(2+) ions. Its function is as follows. Prolyl hydroxylase that mediates hydroxylation of proline residues in target proteins, such as PKM, TELO2, ATF4 and HIF1A. Target proteins are preferentially recognized via a LXXLAP motif. Cellular oxygen sensor that catalyzes, under normoxic conditions, the post-translational formation of 4-hydroxyproline in hypoxia-inducible factor (HIF) alpha proteins. Hydroxylates a specific proline found in each of the oxygen-dependent degradation (ODD) domains (N-terminal, NODD, and C-terminal, CODD) of HIF1A. Also hydroxylates HIF2A. Has a preference for the CODD site for both HIF1A and HIF2A. Hydroxylation on the NODD site by EGLN3 appears to require prior hydroxylation on the CODD site. Hydroxylated HIFs are then targeted for proteasomal degradation via the von Hippel-Lindau ubiquitination complex. Under hypoxic conditions, the hydroxylation reaction is attenuated allowing HIFs to escape degradation resulting in their translocation to the nucleus, heterodimerization with HIF1B, and increased expression of hypoxy-inducible genes. ELGN3 is the most important isozyme in limiting physiological activation of HIFs (particularly HIF2A) in hypoxia. Also hydroxylates PKM in hypoxia, limiting glycolysis. Under normoxia, hydroxylates and regulates the stability of ADRB2. Regulator of cardiomyocyte and neuronal apoptosis. In cardiomyocytes, inhibits the anti-apoptotic effect of BCL2 by disrupting the BAX-BCL2 complex. In neurons, has a NGF-induced proapoptotic effect, probably through regulating CASP3 activity. Also essential for hypoxic regulation of neutrophilic inflammation. Plays a crucial role in DNA damage response (DDR) by hydroxylating TELO2, promoting its interaction with ATR which is required for activation of the ATR/CHK1/p53 pathway. Also mediates hydroxylation of ATF4, leading to decreased protein stability of ATF4. The polypeptide is Prolyl hydroxylase EGLN3 (Homo sapiens (Human)).